Here is a 221-residue protein sequence, read N- to C-terminus: Octanoyltransferase (221 aa).

The 186-residue stretch at lysine 36 to alanine 221 folds into the BPL/LPL catalytic domain. Substrate is bound by residues arginine 81–histidine 88, alanine 154–glycine 156, and glycine 167–alanine 169. The active-site Acyl-thioester intermediate is the cysteine 185.

It belongs to the LipB family.

The protein resides in the cytoplasm. The enzyme catalyses octanoyl-[ACP] + L-lysyl-[protein] = N(6)-octanoyl-L-lysyl-[protein] + holo-[ACP] + H(+). Its pathway is protein modification; protein lipoylation via endogenous pathway; protein N(6)-(lipoyl)lysine from octanoyl-[acyl-carrier-protein]: step 1/2. In terms of biological role, catalyzes the transfer of endogenously produced octanoic acid from octanoyl-acyl-carrier-protein onto the lipoyl domains of lipoate-dependent enzymes. Lipoyl-ACP can also act as a substrate although octanoyl-ACP is likely to be the physiological substrate. This chain is Octanoyltransferase, found in Parabacteroides distasonis (strain ATCC 8503 / DSM 20701 / CIP 104284 / JCM 5825 / NCTC 11152).